A 105-amino-acid chain; its full sequence is Small ribosomal subunit protein bS20 (105 aa).

This sequence belongs to the bacterial ribosomal protein bS20 family.

In terms of biological role, binds directly to 16S ribosomal RNA. In Moorella thermoacetica (strain ATCC 39073 / JCM 9320), this protein is Small ribosomal subunit protein bS20.